The chain runs to 273 residues: Alcohol dehydrogenase-related 31 kDa protein (273 aa).

Position 11–34 (11–34 (YVADCGGIALETCKVLMTKNIAKL)) interacts with NAD(+). Ser-139 contacts substrate. The active-site Proton acceptor is the Tyr-152.

This sequence belongs to the short-chain dehydrogenases/reductases (SDR) family.

The chain is Alcohol dehydrogenase-related 31 kDa protein (Adhr) from Drosophila immigrans (Fruit fly).